Here is a 297-residue protein sequence, read N- to C-terminus: Acetaldehyde dehydrogenase (297 aa).

15–18 (SGSI) lines the NAD(+) pocket. C130 functions as the Acyl-thioester intermediate in the catalytic mechanism. NAD(+)-binding positions include 162 to 170 (SAGIATREN) and N272.

Belongs to the acetaldehyde dehydrogenase family.

It carries out the reaction acetaldehyde + NAD(+) + CoA = acetyl-CoA + NADH + H(+). The chain is Acetaldehyde dehydrogenase (mhpF) from Burkholderia thailandensis (strain ATCC 700388 / DSM 13276 / CCUG 48851 / CIP 106301 / E264).